A 1154-amino-acid polypeptide reads, in one-letter code: Polyketide biosynthesis protein ThaF (1154 aa).

Residues 330–714 (MHAFLFPGQG…TNGIAPAARV (385 aa)) are acyl transferase. Positions 627–689 (SAVAASAPPR…PAPAPAPAPA (63 aa)) are disordered. A compositionally biased stretch (low complexity) spans 641–672 (ADAQPPAASPARAATAASTMPPASASASASAP). The segment covering 673–689 (APAPAPAPAPAPAPAPA) has biased composition (pro residues).

This sequence in the N-terminal section; belongs to the FabD family.

Its subcellular location is the cytoplasm. The enzyme catalyses holo-[ACP] + malonyl-CoA = malonyl-[ACP] + CoA. It participates in antibiotic biosynthesis. Functionally, involved in production of the polyketide antibiotic thailandamide. Probably has an acyl transferase activity and could also have a flavin mononucleotide-dependent oxidoreductase activity. This chain is Polyketide biosynthesis protein ThaF, found in Burkholderia thailandensis (strain ATCC 700388 / DSM 13276 / CCUG 48851 / CIP 106301 / E264).